The sequence spans 197 residues: dITP/XTP pyrophosphatase (197 aa).

Substrate is bound at residue Thr8 to Lys13. Positions 40 and 69 each coordinate Mg(2+). Asp69 acts as the Proton acceptor in catalysis. Substrate-binding positions include Ser70, Phe154–Asp157, Lys177, and His182–Arg183.

This sequence belongs to the HAM1 NTPase family. As to quaternary structure, homodimer. Mg(2+) serves as cofactor. Requires Mn(2+) as cofactor. The cofactor is Ni(2+).

The enzyme catalyses XTP + H2O = XMP + diphosphate + H(+). The catalysed reaction is dITP + H2O = dIMP + diphosphate + H(+). It carries out the reaction ITP + H2O = IMP + diphosphate + H(+). Its function is as follows. Pyrophosphatase that catalyzes the hydrolysis of nucleoside triphosphates to their monophosphate derivatives, with a high preference for the non-canonical purine nucleotides XTP (xanthosine triphosphate), dITP (deoxyinosine triphosphate) and ITP. Can also efficiently hydrolyze 2'-deoxy-N-6-hydroxylaminopurine triphosphate (dHAPTP). Seems to function as a house-cleaning enzyme that removes non-canonical purine nucleotides from the nucleotide pool, thus preventing their incorporation into DNA/RNA and avoiding chromosomal lesions. To a much lesser extent, is also able to hydrolyze GTP, dGTP and dUTP, but shows very low activity toward the canonical nucleotides dATP, dCTP and dTTP and toward 8-oxo-dGTP, purine deoxyribose triphosphate, 2-aminopurine deoxyribose triphosphate and 2,6-diaminopurine deoxyribose triphosphate. Genetic interactions among priB, dam, lexA, nagC, polA, rdgB, rdgB, rep and uup link the PriA-PriB replication restart pathway to DNA double-strand break repair. The sequence is that of dITP/XTP pyrophosphatase from Escherichia coli (strain K12).